The following is a 303-amino-acid chain: Ornithine carbamoyltransferase (303 aa).

Carbamoyl phosphate is bound by residues 52 to 55, Q79, R103, and 130 to 133; these read STRT and HPCQ. L-ornithine-binding positions include N161, D222, and 226–227; that span reads SM. Carbamoyl phosphate is bound by residues 262–263 and R290; that span reads CL.

Belongs to the aspartate/ornithine carbamoyltransferase superfamily. OTCase family.

The protein localises to the cytoplasm. The catalysed reaction is carbamoyl phosphate + L-ornithine = L-citrulline + phosphate + H(+). Its pathway is amino-acid biosynthesis; L-arginine biosynthesis; L-arginine from L-ornithine and carbamoyl phosphate: step 1/3. Its function is as follows. Reversibly catalyzes the transfer of the carbamoyl group from carbamoyl phosphate (CP) to the N(epsilon) atom of ornithine (ORN) to produce L-citrulline. In Geobacter metallireducens (strain ATCC 53774 / DSM 7210 / GS-15), this protein is Ornithine carbamoyltransferase.